Reading from the N-terminus, the 329-residue chain is GTPase Obg (329 aa).

The Obg domain occupies 1–159 (MQFIDQAIID…WSLQLELKLL (159 aa)). An OBG-type G domain is found at 160 to 328 (AEVGIIGLPN…LLSSIWNELG (169 aa)). ATP is bound by residues 166–173 (GLPNAGKS), 191–195 (FTTLI), 213–216 (DIPG), 280–283 (NKKE), and 309–311 (SAV). Positions 173 and 193 each coordinate Mg(2+).

It belongs to the TRAFAC class OBG-HflX-like GTPase superfamily. OBG GTPase family. As to quaternary structure, monomer. Mg(2+) is required as a cofactor.

The protein localises to the cytoplasm. Functionally, an essential GTPase which binds GTP, GDP and possibly (p)ppGpp with moderate affinity, with high nucleotide exchange rates and a fairly low GTP hydrolysis rate. Plays a role in control of the cell cycle, stress response, ribosome biogenesis and in those bacteria that undergo differentiation, in morphogenesis control. This chain is GTPase Obg, found in Prochlorococcus marinus (strain NATL2A).